The sequence spans 344 residues: Arginine N-succinyltransferase (344 aa).

Leu-125 provides a ligand contact to succinyl-CoA. The Proton donor role is filled by His-229.

It belongs to the arginine N-succinyltransferase family.

The catalysed reaction is succinyl-CoA + L-arginine = N(2)-succinyl-L-arginine + CoA + H(+). It functions in the pathway amino-acid degradation; L-arginine degradation via AST pathway; L-glutamate and succinate from L-arginine: step 1/5. In terms of biological role, catalyzes the transfer of succinyl-CoA to arginine to produce N(2)-succinylarginine. The chain is Arginine N-succinyltransferase from Shigella sonnei (strain Ss046).